Consider the following 486-residue polypeptide: CUGBP Elav-like family member 5 (486 aa).

A compositionally biased stretch (basic and acidic residues) spans 1-11 (MARLTEREARR). Residues 1 to 39 (MARLTEREARRQQQQHPPQQQQPRACPMSGPEPPAQQSD) form a disordered region. The span at 12–24 (QQQQHPPQQQQPR) shows a compositional bias: low complexity. 3 RRM domains span residues 47-128 (IKLF…PADS), 135-215 (RKLF…FADT), and 401-479 (CNLF…LKRP).

This sequence belongs to the CELF/BRUNOL family.

It is found in the nucleus. The protein localises to the cytoplasm. Its function is as follows. RNA-binding protein that may be implicated in the regulation of pre-mRNA alternative splicing. The chain is CUGBP Elav-like family member 5 (celf5) from Xenopus tropicalis (Western clawed frog).